A 687-amino-acid polypeptide reads, in one-letter code: Protein FAR1-RELATED SEQUENCE 1 (687 aa).

One can recognise an FAR1 domain in the interval E35 to T137. One can recognise an MULE domain in the interval K211–P254. The segment at F440–G476 adopts an SWIM-type zinc-finger fold. A coiled-coil region spans residues N540–S562.

It belongs to the FHY3/FAR1 family. In terms of tissue distribution, expressed in rosette and cauline leaves, inflorescences stems, flowers and siliques.

It is found in the nucleus. In terms of biological role, putative transcription activator involved in regulating light control of development. This chain is Protein FAR1-RELATED SEQUENCE 1 (FRS1), found in Arabidopsis thaliana (Mouse-ear cress).